Here is a 522-residue protein sequence, read N- to C-terminus: Zinc finger protein C25B8.19c (522 aa).

Disordered regions lie at residues 1–25, 61–96, 235–265, 311–386, and 413–462; these read MSSDNTPSINRRNNENPPQSSLPTT, DPQAATVSESANVSRPTPAPVPPAGNTNTPTTSNSN, QRQSSEAAEQPSSKNNTSGANPPSSNNQEVT, QPSS…HTLS, and NSAQ…STSS. Residues 84-96 are compositionally biased toward low complexity; the sequence is AGNTNTPTTSNSN. Composition is skewed to polar residues over residues 311–321 and 335–344; these read QPSSRDLQNHP and ASNTLNHANG. The span at 345–362 shows a compositional bias: low complexity; it reads NQAENASESSTSQSNDSQ. A compositionally biased stretch (polar residues) spans 413 to 427; it reads NSAQAHPMGQQSDSN. Positions 428 to 438 are enriched in basic and acidic residues; that stretch reads YSDHHNNDKRA. Residues 453 to 462 are compositionally biased toward low complexity; that stretch reads SHTGSSSTSS. C2H2-type zinc fingers lie at residues 468-495 and 496-522; these read YRCTECLQGFSRPSSLKIHTYSHTGERP and FVCDYAGCGKAFNVRSNMRRHQRIHGL.

Its subcellular location is the nucleus. The chain is Zinc finger protein C25B8.19c from Schizosaccharomyces pombe (strain 972 / ATCC 24843) (Fission yeast).